A 675-amino-acid polypeptide reads, in one-letter code: MPATHHSSATSAERPTVVGRIPVLDVRPVVQRGRRPAKAVTGESFEVSATVFREGHDAVGANVVLRDPRGRPGPWTPMRELAPGTDRWGATVTAGETGTWSYTVEAWGDPVTTWRHHARIKIPAGLDTDLVLEEGARLYERAAADVPGREDRRELLAAVDALRDESRPAASRLAAALTPQVDAVLARHPLRDLVTSSDPLPLLVERERALYGAWYEFFPRSEGTPHTPHGTFRTAARRLPAIAAMGFDVVYLPPIHPIGTTHRKGRNNTLSATGDDVGVPWAIGSPEGGHDSIHPALGTLDDFDHFVTEAGKLGLEIALDFALQCSPDHPWVHKHPEWFHHRPDGTIAHAENPPKKYQDIYPIAFDADPDGLATETVRILRHWMDHGVRIFRVDNPHTKPVAFWERVIADINGTDPDVIFLAEAFTRPAMMATLAQIGFQQSYTYFTWRNTKQELTEYLTELSGEAASYMRPNFFANTPDILHAYLQHGGRPAFEVRAVLAATLSPTWGIYSGYELCENTPLREGSEEYLDSEKYQLKPRDWTRAAREGTTIAPLVTRLNTIRRENPALRQLRDLHFHPTDKEEVIAYSKRQGSNTVLVVVNLDPRHTQEATVSLDMPQLGLDWHESVPVRDELTGETYHWGRANYVRLEPGRTPAHVCTVLRPSHPQIGGSHTT.

Residues lysine 264, glutamine 324, and aspartate 359 each contribute to the alpha-maltose 1-phosphate site. The Nucleophile role is filled by aspartate 394. Asparagine 395 provides a ligand contact to alpha-maltose 1-phosphate. Residue glutamate 423 is the Proton donor of the active site. 534–535 lines the alpha-maltose 1-phosphate pocket; that stretch reads KY.

This sequence belongs to the glycosyl hydrolase 13 family. GlgE subfamily. Homodimer.

The enzyme catalyses alpha-maltose 1-phosphate + [(1-&gt;4)-alpha-D-glucosyl](n) = [(1-&gt;4)-alpha-D-glucosyl](n+2) + phosphate. With respect to regulation, is competitively inhibited by alpha-, beta- and gamma-cyclodextrins (cyclic maltooligosaccharides), unlike GlgE from M.tuberculosis. Its function is as follows. Maltosyltransferase that uses maltose 1-phosphate (M1P) as the sugar donor to elongate linear or branched alpha-(1-&gt;4)-glucans. Maltooligosaccharides with a degree of polymerization (DP) superior or equal to 4 are efficient acceptors, with DP6 being optimal in the GlgE-catalyzed polymerization with M1P. Is specific for the alpha-anomer of M1P as substrate, since the beta-anomer of M1P gives no activity. Alpha-D-glucose 1-phosphate cannot serve as a donor substrate, but alpha-maltosyl fluoride is an efficient donor in vitro. Exhibits an alpha-retaining catalytic mechanism, with evidence that maltooligosaccharide acceptors are extended at their non-reducing ends. Is also able to catalyze the reverse reaction in vitro, releasing M1P from glycogen or maltoheptaose in the presence of inorganic phosphate. Also catalyzes disproportionation reactions through maltosyl transfer between maltooligosaccharides. Is probably involved in a branched alpha-glucan biosynthetic pathway from trehalose, together with TreS, Mak and GlgB. This is Alpha-1,4-glucan:maltose-1-phosphate maltosyltransferase 1 (glgE1) from Streptomyces coelicolor (strain ATCC BAA-471 / A3(2) / M145).